Consider the following 545-residue polypeptide: Probable sucrose-6-phosphate hydrolase (545 aa).

Substrate is bound by residues 107-110 (LLND), Q126, 169-170 (FS), 230-231 (RD), and E285. D110 is a catalytic residue.

Belongs to the glycosyl hydrolase 32 family.

Its subcellular location is the cytoplasm. It catalyses the reaction Hydrolysis of terminal non-reducing beta-D-fructofuranoside residues in beta-D-fructofuranosides.. Its pathway is glycan biosynthesis; sucrose metabolism. Enables the bacterium to metabolize sucrose as a sole carbon source. This chain is Probable sucrose-6-phosphate hydrolase, found in Psychromonas ingrahamii (strain DSM 17664 / CCUG 51855 / 37).